Reading from the N-terminus, the 121-residue chain is UPF0738 protein BLi01253/BL05110 (121 aa).

This sequence belongs to the UPF0738 family.

The sequence is that of UPF0738 protein BLi01253/BL05110 from Bacillus licheniformis (strain ATCC 14580 / DSM 13 / JCM 2505 / CCUG 7422 / NBRC 12200 / NCIMB 9375 / NCTC 10341 / NRRL NRS-1264 / Gibson 46).